The primary structure comprises 164 residues: Putative pre-16S rRNA nuclease (164 aa).

This sequence belongs to the YqgF nuclease family.

The protein resides in the cytoplasm. Functionally, could be a nuclease involved in processing of the 5'-end of pre-16S rRNA. This chain is Putative pre-16S rRNA nuclease, found in Rhizobium etli (strain CIAT 652).